The chain runs to 147 residues: Endoribonuclease YbeY (147 aa).

His-111, His-115, and Asp-121 together coordinate Zn(2+).

The protein belongs to the endoribonuclease YbeY family. Zn(2+) is required as a cofactor.

The protein localises to the cytoplasm. Its function is as follows. Single strand-specific metallo-endoribonuclease involved in late-stage 70S ribosome quality control and in maturation of the 3' terminus of the 16S rRNA. The polypeptide is Endoribonuclease YbeY (Amoebophilus asiaticus (strain 5a2)).